Consider the following 310-residue polypeptide: Ribosomal RNA small subunit methyltransferase H (310 aa).

S-adenosyl-L-methionine-binding positions include 33 to 35 (AGH), aspartate 53, phenylalanine 79, aspartate 100, and glutamine 107.

Belongs to the methyltransferase superfamily. RsmH family.

The protein localises to the cytoplasm. It carries out the reaction cytidine(1402) in 16S rRNA + S-adenosyl-L-methionine = N(4)-methylcytidine(1402) in 16S rRNA + S-adenosyl-L-homocysteine + H(+). Specifically methylates the N4 position of cytidine in position 1402 (C1402) of 16S rRNA. In Desulfitobacterium hafniense (strain DSM 10664 / DCB-2), this protein is Ribosomal RNA small subunit methyltransferase H.